The following is a 234-amino-acid chain: Large ribosomal subunit protein uL1 (234 aa).

The protein belongs to the universal ribosomal protein uL1 family. As to quaternary structure, part of the 50S ribosomal subunit.

Binds directly to 23S rRNA. The L1 stalk is quite mobile in the ribosome, and is involved in E site tRNA release. Its function is as follows. Protein L1 is also a translational repressor protein, it controls the translation of the L11 operon by binding to its mRNA. This Geobacter metallireducens (strain ATCC 53774 / DSM 7210 / GS-15) protein is Large ribosomal subunit protein uL1.